Here is a 720-residue protein sequence, read N- to C-terminus: Fatty acid CoA ligase Acsl3 (720 aa).

A helical; Signal-anchor for type III membrane protein membrane pass occupies residues 21 to 41 (ILLYFIHFIISLYTILTYIPF). The Cytoplasmic segment spans residues 42–720 (YFLCESKQEK…ADIERMYGRK (679 aa)). Serine 683 bears the Phosphoserine mark.

Belongs to the ATP-dependent AMP-binding enzyme family. Mg(2+) serves as cofactor. In terms of tissue distribution, predominantly expressed in the brain, and to a much lesser extent, in lung, adrenal gland, kidney, small intestine, and adipose tissue but not detected in heart or liver.

The protein resides in the mitochondrion outer membrane. Its subcellular location is the peroxisome membrane. It is found in the microsome membrane. It localises to the endoplasmic reticulum membrane. It catalyses the reaction a long-chain fatty acid + ATP + CoA = a long-chain fatty acyl-CoA + AMP + diphosphate. The enzyme catalyses (5Z,8Z,11Z,14Z)-eicosatetraenoate + ATP + CoA = (5Z,8Z,11Z,14Z)-eicosatetraenoyl-CoA + AMP + diphosphate. It carries out the reaction a medium-chain fatty acid + ATP + CoA = a medium-chain fatty acyl-CoA + AMP + diphosphate. The catalysed reaction is 15-hydroxy-(5Z,8Z,11Z,13E)-eicosatetraenoate + ATP + CoA = 15-hydroxy-(5Z,8Z,11Z,13E)-eicosatetraenoyl-CoA + AMP + diphosphate. It catalyses the reaction 12-hydroxy-(5Z,8Z,10E,14Z)-eicosatetraenoate + ATP + CoA = 12-hydroxy-(5Z,8Z,10E,14Z)-eicosatetraenoyl-CoA + AMP + diphosphate. The enzyme catalyses 5-hydroxy-(6E,8Z,11Z,14Z)-eicosatetraenoate + ATP + CoA = 5-hydroxy-(6E,8Z,11Z,14Z)-eicosatetraenoyl-CoA + AMP + diphosphate. It carries out the reaction 14,15-epoxy-(5Z,8Z,11Z)-eicosatrienoate + ATP + CoA = 14,15-epoxy-(5Z,8Z,11Z)-eicosatrienoyl-CoA + AMP + diphosphate. The catalysed reaction is 11,12-epoxy-(5Z,8Z,14Z)-eicosatrienoate + ATP + CoA = 11,12-epoxy-(5Z,8Z,14Z)-eicosatrienoyl-CoA + AMP + diphosphate. It catalyses the reaction (E)-hexadec-2-enoate + ATP + CoA = (2E)-hexadecenoyl-CoA + AMP + diphosphate. The enzyme catalyses hexadecanoate + ATP + CoA = hexadecanoyl-CoA + AMP + diphosphate. It carries out the reaction tetradecanoate + ATP + CoA = tetradecanoyl-CoA + AMP + diphosphate. The catalysed reaction is dodecanoate + ATP + CoA = dodecanoyl-CoA + AMP + diphosphate. It catalyses the reaction octadecanoate + ATP + CoA = octadecanoyl-CoA + AMP + diphosphate. The enzyme catalyses eicosanoate + ATP + CoA = eicosanoyl-CoA + AMP + diphosphate. It carries out the reaction (9Z)-octadecenoate + ATP + CoA = (9Z)-octadecenoyl-CoA + AMP + diphosphate. The catalysed reaction is (9Z)-hexadecenoate + ATP + CoA = (9Z)-hexadecenoyl-CoA + AMP + diphosphate. It catalyses the reaction (9Z,12Z)-octadecadienoate + ATP + CoA = (9Z,12Z)-octadecadienoyl-CoA + AMP + diphosphate. The enzyme catalyses (9Z,12Z,15Z)-octadecatrienoate + ATP + CoA = (9Z,12Z,15Z)-octadecatrienoyl-CoA + AMP + diphosphate. It carries out the reaction (4Z,7Z,10Z,13Z,16Z,19Z)-docosahexaenoate + ATP + CoA = (4Z,7Z,10Z,13Z,16Z,19Z)-docosahexaenoyl-CoA + AMP + diphosphate. The catalysed reaction is (5Z,8Z,11Z,14Z,17Z)-eicosapentaenoate + ATP + CoA = (5Z,8Z,11Z,14Z,17Z)-eicosapentaenoyl-CoA + AMP + diphosphate. It catalyses the reaction a fatty acid + ATP + CoA = a fatty acyl-CoA + AMP + diphosphate. Its function is as follows. Catalyzes the conversion of long-chain fatty acids to their active form acyl-CoA for both synthesis of cellular lipids, and degradation via beta-oxidation. ACSL3 is required for the incorporation of fatty acids into phosphatidylcholine, the major phospholipid located on the surface of VLDL (very low density lipoproteins). Has mainly an anabolic role in energy metabolism. Mediates hepatic lipogenesis. Preferentially uses myristate, laurate, arachidonate and eicosapentaenoate as substrates. Both isoforms exhibit the same level of activity. The chain is Fatty acid CoA ligase Acsl3 from Rattus norvegicus (Rat).